The chain runs to 183 residues: Outer membrane protein H.8 (183 aa).

An N-terminal signal peptide occupies residues 1–17 (MKAYLALISAAVIGLAA). Cysteine 18 is lipidated: N-palmitoyl cysteine. Cysteine 18 is lipidated: S-diacylglycerol cysteine. The segment at 27–51 (AEATPAAEAPASEAPAAEAAPADAA) is disordered. The region spanning 57-183 (GNCAATVESN…LMNGKVTLVD (127 aa)) is the Plastocyanin-like domain. The Cu cation site is built by histidine 102, cysteine 166, histidine 171, and methionine 175.

Cu cation serves as cofactor.

It localises to the cell outer membrane. This is Outer membrane protein H.8 from Neisseria meningitidis serogroup C / serotype 2a (strain ATCC 700532 / DSM 15464 / FAM18).